The primary structure comprises 235 residues: Small ribosomal subunit protein uS2c (235 aa).

It belongs to the universal ribosomal protein uS2 family.

It is found in the plastid. It localises to the chloroplast. The protein is Small ribosomal subunit protein uS2c (rps2) of Adiantum capillus-veneris (Maidenhair fern).